The primary structure comprises 305 residues: Mycothiol acetyltransferase (305 aa).

2 consecutive N-acetyltransferase domains span residues Asp10 to Pro153 and Ile156 to Ala305. Glu38 is a 1D-myo-inositol 2-(L-cysteinylamino)-2-deoxy-alpha-D-glucopyranoside binding site. Residue Leu82–Val84 coordinates acetyl-CoA. 3 residues coordinate 1D-myo-inositol 2-(L-cysteinylamino)-2-deoxy-alpha-D-glucopyranoside: Glu183, Lys225, and Glu238. Residues Val242–Ile244 and Gln249–Arg255 contribute to the acetyl-CoA site. Tyr276 lines the 1D-myo-inositol 2-(L-cysteinylamino)-2-deoxy-alpha-D-glucopyranoside pocket. Residue Asn281–His286 participates in acetyl-CoA binding.

The protein belongs to the acetyltransferase family. MshD subfamily. As to quaternary structure, monomer.

It catalyses the reaction 1D-myo-inositol 2-(L-cysteinylamino)-2-deoxy-alpha-D-glucopyranoside + acetyl-CoA = mycothiol + CoA + H(+). Functionally, catalyzes the transfer of acetyl from acetyl-CoA to desacetylmycothiol (Cys-GlcN-Ins) to form mycothiol. The chain is Mycothiol acetyltransferase from Rhodococcus jostii (strain RHA1).